The sequence spans 422 residues: Proline-rich protein 22 (422 aa).

Disordered stretches follow at residues 1–35, 306–325, and 363–422; these read MQHP…PAPT, LCEV…SADD, and EEQP…ATPH. A compositionally biased stretch (basic residues) spans 383–400; the sequence is GKRKASTAKKGKPGRKAR. A compositionally biased stretch (basic and acidic residues) spans 413–422; sequence PREDLGATPH.

The sequence is that of Proline-rich protein 22 (PRR22) from Homo sapiens (Human).